A 281-amino-acid polypeptide reads, in one-letter code: Type VI secretion system accessory component TagJ (281 aa).

Interacts with TssB1 (via N-terminus). Interacts with ClpV1.

Component of the H1 type VI (H1-T6SS) secretion system that plays a role in the release of toxins targeting both eukaryotic and prokaryotic species. Forms a stable complex with TssB1. This complex, although not crucial for the H1-T6SS function, may fine-tune the assembly of the system. Plays a role in the interaction between ClpV1 and the TssC1/TssB1 sheath. The polypeptide is Type VI secretion system accessory component TagJ (Pseudomonas aeruginosa (strain ATCC 15692 / DSM 22644 / CIP 104116 / JCM 14847 / LMG 12228 / 1C / PRS 101 / PAO1)).